The primary structure comprises 507 residues: ATP synthase subunit alpha, chloroplastic (507 aa).

Position 170–177 (Gly170–Thr177) interacts with ATP.

It belongs to the ATPase alpha/beta chains family. As to quaternary structure, F-type ATPases have 2 components, CF(1) - the catalytic core - and CF(0) - the membrane proton channel. CF(1) has five subunits: alpha(3), beta(3), gamma(1), delta(1), epsilon(1). CF(0) has four main subunits: a, b, b' and c.

The protein resides in the plastid. It localises to the chloroplast thylakoid membrane. It catalyses the reaction ATP + H2O + 4 H(+)(in) = ADP + phosphate + 5 H(+)(out). In terms of biological role, produces ATP from ADP in the presence of a proton gradient across the membrane. The alpha chain is a regulatory subunit. In Tetradesmus obliquus (Green alga), this protein is ATP synthase subunit alpha, chloroplastic.